The sequence spans 527 residues: MDGHTCDVFVGKLIHTPSLGELEITDATVGVYNGKIVFLEKSMTPKTLEEAKSHHLLKEATIHKLKPLQFMFPGLIDTHIHAPQYPNSGIGIDVPLLQWLEKYTFPLESSLADLEEARQVYKRVVERTLSNGTTFASYFSTLHTPTSALLAEICYSYGQRAYIGKCNMNNLSPDHYCEKSAESSLEATRQLISYMSILDPKREMVTPIITPRFAPSCTEDLLSGCGELAEKHNLPIQTHISENTSEIELVKELFPERKSYADVYDYYKLLTPQTILAHAIHLEDEEIELLTKRSSGISHCPTSNSILASGLANVRKLLDSGINVGLGTDVSGGYAPSILIALRHAAMTSRSLSYVLGDPKVMLDLSELLYLATQGGAEVVSRGDQVGSFAVGKYWDALIVDLSAETHSCVDIFERDTWPVMLSKWVFTSDDRNLAQVWVNGRLVSGFEMKANLKNSTPLTNGVTSSGHQVFKELTQAHLLPRTQCVDTPPSCCGGHCCKEESCRTENCKGAYPANATVTVEEDSGMS.

Residues histidine 79 and histidine 81 each coordinate Zn(2+). Substrate is bound by residues 81 to 84, 212 to 213, 239 to 242, and aspartate 329; these read HAPQ, RF, and HISE. 2 residues coordinate Zn(2+): histidine 239 and aspartate 329.

This sequence belongs to the metallo-dependent hydrolases superfamily. ATZ/TRZ family. It depends on Zn(2+) as a cofactor.

The enzyme catalyses guanine + H2O + H(+) = xanthine + NH4(+). The protein operates within purine metabolism; guanine degradation; xanthine from guanine: step 1/1. In terms of biological role, catalyzes the hydrolytic deamination of guanine, producing xanthine and ammonia. The protein is Probable guanine deaminase of Schizosaccharomyces pombe (strain 972 / ATCC 24843) (Fission yeast).